The chain runs to 155 residues: Large ribosomal subunit protein uL16 (155 aa).

The interval 1-22 is disordered; the sequence is MLSPKRTKYRKQQRGRMKGKAT.

This sequence belongs to the universal ribosomal protein uL16 family. As to quaternary structure, part of the 50S ribosomal subunit.

Functionally, binds 23S rRNA and is also seen to make contacts with the A and possibly P site tRNAs. The protein is Large ribosomal subunit protein uL16 of Synechococcus sp. (strain JA-2-3B'a(2-13)) (Cyanobacteria bacterium Yellowstone B-Prime).